Here is a 266-residue protein sequence, read N- to C-terminus: Undecaprenyl-diphosphatase (266 aa).

Helical transmembrane passes span 4–24 (ILRVIILGFVQGISEFLPISS), 39–59 (LPIVFDIYLHFATVLVVIIYY), 88–108 (LNLILLILIITFFTALIGIFI), 114–134 (LFTFKLVLFNFIVTSILLFLI), 147–167 (IFFSGLLIGIMQGIGAMPGIS), 186–206 (SLEISFLSLIPIVFGSLFLKY), 214–234 (IIFNIFEINLGAIFAFIFGLF), and 246–266 (SKLYYFSIYLVSVVSLVYFLV).

The protein belongs to the UppP family.

Its subcellular location is the cell inner membrane. It carries out the reaction di-trans,octa-cis-undecaprenyl diphosphate + H2O = di-trans,octa-cis-undecaprenyl phosphate + phosphate + H(+). Catalyzes the dephosphorylation of undecaprenyl diphosphate (UPP). Confers resistance to bacitracin. The sequence is that of Undecaprenyl-diphosphatase from Borrelia recurrentis (strain A1).